We begin with the raw amino-acid sequence, 90 residues long: N(2)-fixation sustaining protein CowN (90 aa).

It belongs to the CowN family.

Its function is as follows. Is required to sustain N(2)-dependent growth in the presence of low levels of carbon monoxide (CO). Probably acts by protecting the N(2) fixation ability of the nitrogenase complex, which is inactivated in the presence of CO. The polypeptide is N(2)-fixation sustaining protein CowN (Halorhodospira halophila (strain DSM 244 / SL1) (Ectothiorhodospira halophila (strain DSM 244 / SL1))).